The sequence spans 326 residues: Vomeronasal type-1 receptor 100 (326 aa).

The Extracellular segment spans residues 1 to 32 (MSEFPFFSPQPLFSYMMNKNSRVHTDSNIRNT). The helical transmembrane segment at 33–53 (FFTEIGIGILANSFLLLFHIF) threads the bilayer. Topologically, residues 54–70 (KFIRGQRSRLTDLPIGL) are cytoplasmic. Residues 71–91 (LSLIHLLMLLMGAFIAIDIFI) traverse the membrane as a helical segment. At 92–104 (SWRGWDDIICKFL) the chain is on the extracellular side. The cysteines at positions 101 and 188 are disulfide-linked. A helical membrane pass occupies residues 105-127 (VYLYRSFRGLSLCTTCMLSVLQA). Topologically, residues 128-149 (ITLSPRSSCLAKFKHKSPHHVS) are cytoplasmic. The chain crosses the membrane as a helical span at residues 150–170 (CAIISLSILYMFISSHLLVSI). Topologically, residues 171-209 (NATPNLTTNNFMQVTQSCYIIPLSYLMQSMFSTLLAIRD) are extracellular. The N-linked (GlcNAc...) asparagine glycan is linked to Asn-175. The helical transmembrane segment at 210–230 (ISLISLMVLSTCYMVVLLCRH) threads the bilayer. At 231–254 (RNQIQHLQGTNLSPKASPEQRATQ) the chain is on the cytoplasmic side. The chain crosses the membrane as a helical span at residues 255–275 (TILMLMTFFVLMSIFDSIVSC). Residues 276–285 (SRTMYLNDPT) are Extracellular-facing. A helical transmembrane segment spans residues 286 to 306 (SYYIQIFVVYIYATVSPFVFM). Residues 307–326 (STEKHIVNFLKSMCVRVKNV) are Cytoplasmic-facing.

The protein belongs to the G-protein coupled receptor 1 family. In terms of tissue distribution, expressed in 1-4% of neurons of the vomeronasal organ. Only one pheromone receptor gene may be expressed in a particular neuron. Not expressed in the main olfactory epithelium.

The protein localises to the cell membrane. Functionally, putative pheromone receptor implicated in the regulation of social as well as reproductive behavior. This is Vomeronasal type-1 receptor 100 (Vom1r100) from Rattus norvegicus (Rat).